The primary structure comprises 196 residues: Oplophorus-luciferin 2-monooxygenase catalytic subunit (196 aa).

The first 27 residues, methionine 1–threonine 27, serve as a signal peptide directing secretion.

Heterotetramer of a catalytic 19 kDa and a non-catalytic 35 kDa subunit.

Its subcellular location is the secreted. It carries out the reaction coelenterazine + O2 = coelenteramide + hnu + CO2. Inhibited by micromolar Cu(2+). Catalytic subunit of oplophorus-luciferin 2-monooxygenase. Oxidoreductase that converts coelenterazine (the oplophorus luciferin) to coelenteramide under emission of blue light with a maximum at 454 nm. Is also active with bisdeoxycoelenterazine. The sequence is that of Oplophorus-luciferin 2-monooxygenase catalytic subunit from Oplophorus gracilirostris (Luminous shrimp).